Here is a 694-residue protein sequence, read N- to C-terminus: Elongation factor G (694 aa).

A tr-type G domain is found at 9–288 (SKIRNIGIMA…VIVKWLPSPK (280 aa)). Residues 18–25 (AHIDAGKT), 82–86 (DTPGH), and 136–139 (NKMD) contribute to the GTP site.

This sequence belongs to the TRAFAC class translation factor GTPase superfamily. Classic translation factor GTPase family. EF-G/EF-2 subfamily.

It is found in the cytoplasm. In terms of biological role, catalyzes the GTP-dependent ribosomal translocation step during translation elongation. During this step, the ribosome changes from the pre-translocational (PRE) to the post-translocational (POST) state as the newly formed A-site-bound peptidyl-tRNA and P-site-bound deacylated tRNA move to the P and E sites, respectively. Catalyzes the coordinated movement of the two tRNA molecules, the mRNA and conformational changes in the ribosome. The protein is Elongation factor G of Chlamydia abortus (strain DSM 27085 / S26/3) (Chlamydophila abortus).